A 1444-amino-acid chain; its full sequence is DNA polymerase III PolC-type (1444 aa).

An Exonuclease domain is found at 421-577; that stretch reads YVVFDVETTG…ADAEATGYLL (157 aa).

It belongs to the DNA polymerase type-C family. PolC subfamily.

The protein resides in the cytoplasm. The catalysed reaction is DNA(n) + a 2'-deoxyribonucleoside 5'-triphosphate = DNA(n+1) + diphosphate. Functionally, required for replicative DNA synthesis. This DNA polymerase also exhibits 3' to 5' exonuclease activity. This chain is DNA polymerase III PolC-type, found in Lacticaseibacillus paracasei (strain ATCC 334 / BCRC 17002 / CCUG 31169 / CIP 107868 / KCTC 3260 / NRRL B-441) (Lactobacillus paracasei).